Here is a 342-residue protein sequence, read N- to C-terminus: Pre-mRNA-splicing factor 18 (342 aa).

N-acetylmethionine is present on M1.

It belongs to the PRP18 family. As to quaternary structure, heterodimer with PPIH. Interacts with PRPF4 and with the spliceosome. Part of a complex containing U4/U6 snRNPs.

It is found in the nucleus speckle. Participates in the second step of pre-mRNA splicing. This is Pre-mRNA-splicing factor 18 (PRPF18) from Pongo abelii (Sumatran orangutan).